A 642-amino-acid chain; its full sequence is Tigger transposable element derived 5 (642 aa).

The tract at residues Met-1 to Pro-54 is disordered. Residues Pro-31–Arg-53 are compositionally biased toward pro residues. In terms of domain architecture, HTH psq-type spans Ala-57–Leu-108. 2 consecutive DNA-binding regions (H-T-H motif) follow at residues Gln-84–Asp-104 and Pro-155–Arg-188. In terms of domain architecture, HTH CENPB-type spans Gln-122–Arg-195. A disordered region spans residues Ser-202 to Tyr-238. In terms of domain architecture, DDE-1 spans Asp-240–Val-365. 2 disordered regions span residues Thr-375–Glu-400 and Gly-548–Gly-581.

It belongs to the tigger transposable element derived protein family.

It localises to the nucleus. The sequence is that of Tigger transposable element derived 5 (Tigd5) from Mus musculus (Mouse).